The sequence spans 118 residues: Small ribosomal subunit protein uS13 (118 aa).

The interval 91 to 118 (HRRSLPLRGQRTKNNARTRKGPKKPIKR) is disordered.

This sequence belongs to the universal ribosomal protein uS13 family. Part of the 30S ribosomal subunit. Forms a loose heterodimer with protein S19. Forms two bridges to the 50S subunit in the 70S ribosome.

Its function is as follows. Located at the top of the head of the 30S subunit, it contacts several helices of the 16S rRNA. In the 70S ribosome it contacts the 23S rRNA (bridge B1a) and protein L5 of the 50S subunit (bridge B1b), connecting the 2 subunits; these bridges are implicated in subunit movement. Contacts the tRNAs in the A and P-sites. This chain is Small ribosomal subunit protein uS13, found in Hydrogenovibrio crunogenus (strain DSM 25203 / XCL-2) (Thiomicrospira crunogena).